We begin with the raw amino-acid sequence, 362 residues long: Methylthioribose-1-phosphate isomerase (362 aa).

The Proton donor role is filled by D252.

Belongs to the eIF-2B alpha/beta/delta subunits family. MtnA subfamily.

The protein localises to the cytoplasm. It localises to the nucleus. It carries out the reaction 5-(methylsulfanyl)-alpha-D-ribose 1-phosphate = 5-(methylsulfanyl)-D-ribulose 1-phosphate. The protein operates within amino-acid biosynthesis; L-methionine biosynthesis via salvage pathway; L-methionine from S-methyl-5-thio-alpha-D-ribose 1-phosphate: step 1/6. In terms of biological role, catalyzes the interconversion of methylthioribose-1-phosphate (MTR-1-P) into methylthioribulose-1-phosphate (MTRu-1-P). The polypeptide is Methylthioribose-1-phosphate isomerase (Drosophila mojavensis (Fruit fly)).